A 422-amino-acid chain; its full sequence is 5'-deoxyadenosine deaminase (422 aa).

Residues H57 and H59 each coordinate Zn(2+). The substrate site is built by E86 and H178. A Zn(2+)-binding site is contributed by H205. Residues E208 and D294 each coordinate substrate. D294 is a Zn(2+) binding site.

This sequence belongs to the metallo-dependent hydrolases superfamily. MTA/SAH deaminase family. As to quaternary structure, homotetramer. Zn(2+) is required as a cofactor.

It catalyses the reaction 5'-deoxyadenosine + H2O + H(+) = 5'-deoxyinosine + NH4(+). The catalysed reaction is S-adenosyl-L-homocysteine + H2O + H(+) = S-inosyl-L-homocysteine + NH4(+). The enzyme catalyses S-methyl-5'-thioadenosine + H2O + H(+) = S-methyl-5'-thioinosine + NH4(+). It carries out the reaction adenosine + H2O + H(+) = inosine + NH4(+). The protein operates within amino-acid biosynthesis; S-adenosyl-L-methionine biosynthesis. Catalyzes the deamination of three SAM-derived enzymatic products, namely 5'-deoxyadenosine, S-adenosyl-L-homocysteine, and 5'-methylthioadenosine, to produce the inosine analogs. Can also deaminate adenosine. The preferred substrate for this enzyme is 5'-deoxyadenosine, but all these substrates are efficiently deaminated. Likely functions in a S-adenosyl-L-methionine (SAM) recycling pathway from S-adenosyl-L-homocysteine (SAH) produced from SAM-dependent methylation reactions. May also be involved in the recycling of 5'-deoxyadenosine, whereupon the 5'-deoxyribose moiety of 5'-deoxyinosine is further metabolized to deoxyhexoses used for the biosynthesis of aromatic amino acids in methanogens. The sequence is that of 5'-deoxyadenosine deaminase from Methanococcus maripaludis (strain DSM 14266 / JCM 13030 / NBRC 101832 / S2 / LL).